A 370-amino-acid polypeptide reads, in one-letter code: Coproporphyrin III ferrochelatase (370 aa).

Residues Ser-58 and Tyr-127 each coordinate Fe-coproporphyrin III. Fe(2+) is bound by residues His-189 and Glu-276.

The protein belongs to the ferrochelatase family.

The protein resides in the cytoplasm. It catalyses the reaction Fe-coproporphyrin III + 2 H(+) = coproporphyrin III + Fe(2+). The protein operates within porphyrin-containing compound metabolism; protoheme biosynthesis. In terms of biological role, involved in coproporphyrin-dependent heme b biosynthesis. Catalyzes the insertion of ferrous iron into coproporphyrin III to form Fe-coproporphyrin III. In Corynebacterium glutamicum (strain ATCC 13032 / DSM 20300 / JCM 1318 / BCRC 11384 / CCUG 27702 / LMG 3730 / NBRC 12168 / NCIMB 10025 / NRRL B-2784 / 534), this protein is Coproporphyrin III ferrochelatase.